The primary structure comprises 160 residues: Ribosomal RNA large subunit methyltransferase H (160 aa).

S-adenosyl-L-methionine-binding positions include leucine 76, glycine 108, and 127–132 (FGALTW).

The protein belongs to the RNA methyltransferase RlmH family. In terms of assembly, homodimer.

It localises to the cytoplasm. It catalyses the reaction pseudouridine(1915) in 23S rRNA + S-adenosyl-L-methionine = N(3)-methylpseudouridine(1915) in 23S rRNA + S-adenosyl-L-homocysteine + H(+). Functionally, specifically methylates the pseudouridine at position 1915 (m3Psi1915) in 23S rRNA. The chain is Ribosomal RNA large subunit methyltransferase H from Mesorhizobium japonicum (strain LMG 29417 / CECT 9101 / MAFF 303099) (Mesorhizobium loti (strain MAFF 303099)).